Consider the following 55-residue polypeptide: Protein CADMIUM TOLERANCE 1 (55 aa).

Residues 24–40 form a helical membrane-spanning segment; sequence GCLYACIFTALCCFCCY.

The protein belongs to the CYSTM1 family. In terms of tissue distribution, expressed in roots and shoots.

It is found in the cell membrane. The protein resides in the secreted. The protein localises to the cell wall. In terms of biological role, confers resistance to heavy metal ions (e.g. cadmium (CdCl(2)) and copper (CuCl(2))) by chelating them at the plasma membrane of root cells, thus stopping their entry and reducing their accumulation. Binds to aluminium (Al). This is Protein CADMIUM TOLERANCE 1 from Oryza sativa subsp. japonica (Rice).